The sequence spans 485 residues: Auxin transporter protein 1 (485 aa).

Topologically, residues Met-1 to Gln-59 are cytoplasmic. The span at Asp-12–Arg-22 shows a compositional bias: polar residues. Positions Asp-12–Ser-33 are disordered. Over residues Thr-23–Gly-32 the composition is skewed to basic and acidic residues. A helical membrane pass occupies residues Val-60–Leu-77. Over Ser-78 to Gly-79 the chain is Extracellular. A helical transmembrane segment spans residues Ile-80–Leu-100. At Tyr-101–Lys-135 the chain is on the cytoplasmic side. The helical transmembrane segment at Ala-136–Ala-156 threads the bilayer. Topologically, residues Cys-157–Thr-172 are extracellular. Residues Trp-173 to Tyr-193 form a helical membrane-spanning segment. At Arg-194 to Trp-196 the chain is on the cytoplasmic side. The chain crosses the membrane as a helical span at residues Ser-197–Ile-217. Residues His-218–Leu-232 are Extracellular-facing. The helical transmembrane segment at Val-233–Val-253 threads the bilayer. The Cytoplasmic portion of the chain corresponds to Glu-254–Lys-266. The chain crosses the membrane as a helical span at residues Tyr-267 to Val-287. Residues Tyr-288–Ala-314 are Extracellular-facing. The helical transmembrane segment at Val-315–Phe-335 threads the bilayer. Topologically, residues Val-336–Arg-356 are cytoplasmic. A helical membrane pass occupies residues Leu-357 to Asn-377. Position 378 (Ser-378) is a topological domain, extracellular. The helical transmembrane segment at Ala-379–Leu-399 threads the bilayer. The Cytoplasmic segment spans residues Thr-400 to Tyr-425. A helical transmembrane segment spans residues Val-426–Ala-446. The Extracellular portion of the chain corresponds to Ser-447 to Leu-485.

The protein belongs to the amino acid/polyamine transporter 2 family. Amino acid/auxin permease (AAAP) (TC 2.A.18.1) subfamily. Expressed in root and shoot apical tissues. In root apex, confined to stele initials, protophloem poles, statolith-containing S2 columella cells, lateral root cap cells (LRC), and in epidermal cells from the distal elongation zone (DEZ) up to central elongation zone (CEZ).

It is found in the cell membrane. Auxin uptake mediated by AUX1 is inhibited by chromosaponin-1 (CSI), 1-naphthoxyacetic acid (1-NOA) and 3-chloro-4-hydroxyphenylacetic acid (CHPAA). Functionally, carrier protein involved in proton-driven auxin influx. Mediates the formation of auxin gradient from developing leaves (site of auxin biosynthesis) to tips by contributing to the loading of auxin in vascular tissues and facilitating acropetal (base to tip) auxin transport within inner tissues of the root apex, and basipetal (tip to base) auxin transport within outer tissues of the root apex. Unloads auxin from the mature phloem to deliver the hormone to the root meristem via the protophloem cell files. Coordinated subcellular localization of AUX1 is regulated by a brefeldin A-sensitive (BFA) vesicle trafficking process. Involved in lateral root formation, trichoblast polarization and root hair elongation. Required for gravitropism and thigmotropism, especially in roots, by modulating responses to auxin, ethylene and cytokinins such as benzyladenine (BA). Needed for ammonium-mediated root-growth inhibition. Confers sensitivity to the herbicide 2,4-dichlorophenoxyacetic acid (2,4-D, auxin analog), and to polar auxin transport inhibitors such as N-1-naphthylphthalamic acid (NPA) and 2,3,5-triiodobenzoic acid (TIBA). In Arabidopsis thaliana (Mouse-ear cress), this protein is Auxin transporter protein 1 (AUX1).